A 304-amino-acid polypeptide reads, in one-letter code: Glutaminase (304 aa).

Substrate is bound by residues Ser-63, Asn-114, Glu-158, Asn-165, Tyr-189, Tyr-240, and Val-258.

This sequence belongs to the glutaminase family. In terms of assembly, homotetramer.

The catalysed reaction is L-glutamine + H2O = L-glutamate + NH4(+). This chain is Glutaminase, found in Shewanella baltica (strain OS185).